The sequence spans 152 residues: Protein Smg homolog (152 aa).

Belongs to the Smg family.

In Bordetella bronchiseptica (strain ATCC BAA-588 / NCTC 13252 / RB50) (Alcaligenes bronchisepticus), this protein is Protein Smg homolog.